Reading from the N-terminus, the 207-residue chain is Large ribosomal subunit protein bL25 (207 aa).

Belongs to the bacterial ribosomal protein bL25 family. CTC subfamily. As to quaternary structure, part of the 50S ribosomal subunit; part of the 5S rRNA/L5/L18/L25 subcomplex. Contacts the 5S rRNA. Binds to the 5S rRNA independently of L5 and L18.

This is one of the proteins that binds to the 5S RNA in the ribosome where it forms part of the central protuberance. This chain is Large ribosomal subunit protein bL25, found in Orientia tsutsugamushi (strain Ikeda) (Rickettsia tsutsugamushi).